Reading from the N-terminus, the 123-residue chain is Diacylglycerol kinase (123 aa).

Residues 15-32 traverse the membrane as a helical segment; that stretch reads ILNATGYSLAGFLAAFRG. Glutamate 33 lines the a divalent metal cation pocket. 3 consecutive transmembrane segments (helical) span residues 35–55, 61–81, and 102–122; these read AFRQ…LLDV, ALMI…SAIE, and GSAA…TILL. Glutamate 74 functions as the Proton acceptor in the catalytic mechanism. Residue glutamate 81 coordinates a divalent metal cation.

It belongs to the bacterial diacylglycerol kinase family. Requires Mg(2+) as cofactor.

The protein localises to the cell inner membrane. The catalysed reaction is a 1,2-diacyl-sn-glycerol + ATP = a 1,2-diacyl-sn-glycero-3-phosphate + ADP + H(+). Its function is as follows. Catalyzes the ATP-dependent phosphorylation of sn-l,2-diacylglycerol (DAG) to phosphatidic acid. Involved in the recycling of diacylglycerol produced as a by-product during membrane-derived oligosaccharide (MDO) biosynthesis. The chain is Diacylglycerol kinase (dgkA) from Pseudomonas aeruginosa (strain ATCC 15692 / DSM 22644 / CIP 104116 / JCM 14847 / LMG 12228 / 1C / PRS 101 / PAO1).